The primary structure comprises 334 residues: 4-hydroxy-2-methyl-3-oxo-4-farnesyl-3,4-dihydroquinoline-1-oxide ketoreductase (334 aa).

Residue Y139 is the Proton donor of the active site.

It belongs to the 3-beta-HSD family.

The catalysed reaction is aurachin B + NAD(+) + H2O = 4-hydroxy-2-methyl-3-oxo-4-[(2E,6E)-farnesyl]-3,4-dihydroquinoline 1-oxide + NADH. The enzyme catalyses 3,4-dihydroxy-2-methyl-4-[(2E,6E)-farnesyl]-3,4-dihydroquinoline 1-oxide + NAD(+) = 4-hydroxy-2-methyl-3-oxo-4-[(2E,6E)-farnesyl]-3,4-dihydroquinoline 1-oxide + NADH + H(+). In terms of biological role, ketoreductase that catalyzes the final step in the conversion of aurachin C to aurachin B. Catalyzes the reduction of 4-hydroxy-2-methyl-3-oxo-4-[(2E,6E)-farnesyl]-3,4-dihydroquinoline-1-oxide to form 3,4-dihydroxy-2-methyl-4-[(2E,6E)-farnesyl]-3,4-dihydroquinoline 1-oxide, which then undergoes a spontaneous dehydration to form aurachin B. Accepts both NADH and NADPH, but has a preference for NADH. This chain is 4-hydroxy-2-methyl-3-oxo-4-farnesyl-3,4-dihydroquinoline-1-oxide ketoreductase, found in Stigmatella aurantiaca.